Reading from the N-terminus, the 527-residue chain is Putative WEB family protein At4g17210 (527 aa).

2 disordered regions span residues 1-28 (MAKIRTDAPVMPPETPPRSSEVGEIDTR) and 46-70 (FSKKQPPRLSSSSSSQSQDTTTDVS). Residues 55–68 (SSSSSSQSQDTTTD) are compositionally biased toward low complexity. Coiled-coil stretches lie at residues 95–159 (AAKA…YILI), 202–389 (SNKI…AKHM), and 436–513 (KKIR…EAHS).

Belongs to the WEB family.

This Arabidopsis thaliana (Mouse-ear cress) protein is Putative WEB family protein At4g17210.